Here is a 361-residue protein sequence, read N- to C-terminus: ETS translocation variant 3-like protein (361 aa).

The ETS DNA-binding region spans 39-120; that stretch reads IQLWHFILEL…KGKRFTYKFN (82 aa). A disordered region spans residues 178 to 201; that stretch reads LTGQQTPRGPPETSGDKKGSSSSV.

Belongs to the ETS family.

The protein resides in the nucleus. Functionally, transcriptional regulator. This chain is ETS translocation variant 3-like protein (ETV3L), found in Homo sapiens (Human).